The following is a 200-amino-acid chain: RNA-binding protein with multiple splicing 2 (200 aa).

One can recognise an RRM domain in the interval 22–99; it reads RTLFVSGLPV…QTLRLEFAKA (78 aa). An important for homodimerization region spans residues 32–42; it reads DIKPRELYLLF.

Homodimer. As to expression, expressed in developing heart.

The protein localises to the cytoplasm. The protein resides in the nucleus. Its subcellular location is the stress granule. In terms of biological role, RNA-binding protein involved in the regulation of smooth muscle cell differentiation and proliferation in the gastrointestinal system. Binds NOG mRNA, the major inhibitor of the bone morphogenetic protein (BMP) pathway. Mediates an increase of NOG mRNA levels, thereby contributing to the negative regulation of BMP signaling pathway and promoting reversible dedifferentiation and proliferation of smooth muscle cells. Acts as a pre-mRNA alternative splicing regulator. Mediates ACTN1 and FLNB alternative splicing. Likely binds to mRNA tandem CAC trinucleotide or CA dinucleotide motifs. The polypeptide is RNA-binding protein with multiple splicing 2 (Gallus gallus (Chicken)).